A 100-amino-acid chain; its full sequence is Urease subunit gamma (100 aa).

This sequence belongs to the urease gamma subunit family. As to quaternary structure, heterotrimer of UreA (gamma), UreB (beta) and UreC (alpha) subunits. Three heterotrimers associate to form the active enzyme.

It localises to the cytoplasm. It carries out the reaction urea + 2 H2O + H(+) = hydrogencarbonate + 2 NH4(+). It participates in nitrogen metabolism; urea degradation; CO(2) and NH(3) from urea (urease route): step 1/1. This Bordetella bronchiseptica (strain ATCC BAA-588 / NCTC 13252 / RB50) (Alcaligenes bronchisepticus) protein is Urease subunit gamma.